A 212-amino-acid chain; its full sequence is Cyclin-dependent kinase 2-interacting protein (212 aa).

M1 carries the N-acetylmethionine modification. Phosphoserine is present on residues S69 and S73. A coiled-coil region spans residues S73–V107. S202 serves as a coordination point for Na(+).

Belongs to the CINP family. In terms of assembly, homodimer. Part of the 55LCC heterohexameric ATPase complex composed at least of AIRIM, AFG2A, AFG2B and CINP. Interacts with AIRIM. Interacts with CDK2 and CDC7. Interacts with the components of the replication complex, MCM2, MCM3, MCM4, MCM5, MCM6, MCM7 and with ORC2-containing complexes. Interacts with ATRIP. Interacts with CEP152. Associates with pre-60S ribosomal particles. Phosphorylated by CDC7 but not by CDK2.

It localises to the nucleus. Component of the DNA replication complex, which interacts with two kinases, CDK2 and CDC7, thereby providing a functional and physical link between CDK2 and CDC7 during firing of the origins of replication. Regulates ATR-mediated checkpoint signaling in response to DNA damage. Part of the 55LCC heterohexameric ATPase complex which is chromatin-associated and promotes replisome proteostasis to maintain replication fork progression and genome stability. Required for replication fork progression, sister chromatid cohesion, and chromosome stability. The ATPase activity is specifically enhanced by replication fork DNA and is coupled to cysteine protease-dependent cleavage of replisome substrates in response to replication fork damage. Uses ATPase activity to process replisome substrates in S-phase, facilitating their proteolytic turnover from chromatin to ensure DNA replication and mitotic fidelity. As part of 55LCC complex, also involved in the cytoplasmic maturation steps of pre-60S ribosomal particles by promoting the release of shuttling protein RSL24D1/RLP24 from the pre-ribosomal particles. This is Cyclin-dependent kinase 2-interacting protein from Homo sapiens (Human).